A 377-amino-acid polypeptide reads, in one-letter code: Unsaturated 3S-rhamnoglycuronyl hydrolase (377 aa).

The N-terminal stretch at 1–25 (MKNQALKILTLCVLVGSAMSLKLYA) is a signal peptide. The Proton donor role is filled by Asp-161.

This sequence belongs to the glycosyl hydrolase 105 family.

The protein localises to the periplasm. In terms of biological role, unsaturated beta-glucuronyl hydrolase involved in ulvan degradation. Ulvan is the main polysaccharide component of the Ulvales (green seaweed) cell wall. It is composed of disaccharide building blocks comprising 3-sulfated rhamnose (Rha3S) linked to D-glucuronic acid (GlcA), L-iduronic acid (IduA), or D-xylose (Xyl). Unsaturated 3S-rhamnoglycuronyl hydrolase works together with ulvan lyases to fully degrade the ulvan polymer, catalyzing specifically the cleavage of the unsaturated 4-deoxy-L-threo-hex-4-enopyranosiduronic acid (deltaUA) of deltaUA-Rha3S disaccharides and deltaUA-Rha3S-Xyl-Rha3S tetrasaccharides, the end products of the ulvan lyase reaction. Also hydrolases deltaUA-Rha3S-IduA-Rha3S and deltaUA-Rha3S-GlcA-Rha3S tetrasaccharidestetrasaccharides. Prefers tetrasaccharides over disaccharides and prefers an uronic residue at subsite +2. The chain is Unsaturated 3S-rhamnoglycuronyl hydrolase from Formosa agariphila (strain DSM 15362 / KCTC 12365 / LMG 23005 / KMM 3901 / M-2Alg 35-1).